Reading from the N-terminus, the 576-residue chain is Arginine--tRNA ligase (576 aa).

The 'HIGH' region signature appears at 122 to 132 (PNVAKQMHVGH).

The protein belongs to the class-I aminoacyl-tRNA synthetase family. As to quaternary structure, monomer.

It is found in the cytoplasm. The catalysed reaction is tRNA(Arg) + L-arginine + ATP = L-arginyl-tRNA(Arg) + AMP + diphosphate. The sequence is that of Arginine--tRNA ligase from Yersinia pestis bv. Antiqua (strain Antiqua).